The chain runs to 614 residues: Serine/threonine-protein kinase Pkn1 (614 aa).

Residues 13–276 form the Protein kinase domain; that stretch reads YKVIAELGHG…TSGEQLQVTL (264 aa). ATP is bound by residues 19-27 and lysine 42; that span reads LGHGLWSRD.

Belongs to the protein kinase superfamily. Ser/Thr protein kinase family. In terms of assembly, interacts with PknD, interacts with and phosphorylates IncG. Autophosphorylates on serine and threonine residues. Present in elementary bodies 40 hours post-infection as 2 proteins of approximately 70 and 65 kDa; the smaller one may be due to differential phosphorylation or degradation.

It carries out the reaction L-seryl-[protein] + ATP = O-phospho-L-seryl-[protein] + ADP + H(+). The enzyme catalyses L-threonyl-[protein] + ATP = O-phospho-L-threonyl-[protein] + ADP + H(+). Together with the serine/threonine kinase PknD, may play a role in specific interactions with host proteins during host intracellular growth. Autophosphorylates and phosphorylates IncG, an inclusion-membrane protein required for the modification of the nascent chlamydial inclusion. The chain is Serine/threonine-protein kinase Pkn1 (pkn1) from Chlamydia trachomatis serovar L2 (strain ATCC VR-902B / DSM 19102 / 434/Bu).